The following is a 239-amino-acid chain: Putative ABC transporter ATP-binding protein AlbC (239 aa).

The 235-residue stretch at 4-238 folds into the ABC transporter domain; that stretch reads LDIHDVSVWY…RREFFEVIGH (235 aa). 37-44 lines the ATP pocket; the sequence is GVNGAGKT.

Belongs to the ABC transporter superfamily.

Functionally, involved in the production of the bacteriocin subtilosin. Required for immunity to subtilosin. The polypeptide is Putative ABC transporter ATP-binding protein AlbC (albC) (Bacillus subtilis (strain 168)).